We begin with the raw amino-acid sequence, 76 residues long: Small ribosomal subunit protein bS18 (76 aa).

It belongs to the bacterial ribosomal protein bS18 family. As to quaternary structure, part of the 30S ribosomal subunit. Forms a tight heterodimer with protein bS6.

Functionally, binds as a heterodimer with protein bS6 to the central domain of the 16S rRNA, where it helps stabilize the platform of the 30S subunit. In Psychrobacter arcticus (strain DSM 17307 / VKM B-2377 / 273-4), this protein is Small ribosomal subunit protein bS18.